The sequence spans 467 residues: Chromosomal replication initiator protein DnaA (467 aa).

Residues 1-85 (MSLSLWQQCL…FEVGAKPASS (85 aa)) form a domain I, interacts with DnaA modulators region. The tract at residues 85-130 (SLQKGAVSPAAAAIPAAQVQTARVAPTIVRPGWDNVPAPAEPTYRS) is domain II. Residues 131-347 (NVNVKHTFDN…GALNRVIANA (217 aa)) form a domain III, AAA+ region region. Residues Gly175, Gly177, Lys178, and Thr179 each coordinate ATP. The tract at residues 348 to 467 (NFTGRAITID…FSNLIRTLSS (120 aa)) is domain IV, binds dsDNA.

It belongs to the DnaA family. In terms of assembly, oligomerizes as a right-handed, spiral filament on DNA at oriC.

Its subcellular location is the cytoplasm. Functionally, plays an essential role in the initiation and regulation of chromosomal replication. ATP-DnaA binds to the origin of replication (oriC) to initiate formation of the DNA replication initiation complex once per cell cycle. Binds the DnaA box (a 9 base pair repeat at the origin) and separates the double-stranded (ds)DNA. Forms a right-handed helical filament on oriC DNA; dsDNA binds to the exterior of the filament while single-stranded (ss)DNA is stabiized in the filament's interior. The ATP-DnaA-oriC complex binds and stabilizes one strand of the AT-rich DNA unwinding element (DUE), permitting loading of DNA polymerase. After initiation quickly degrades to an ADP-DnaA complex that is not apt for DNA replication. Binds acidic phospholipids. This chain is Chromosomal replication initiator protein DnaA, found in Klebsiella pneumoniae (strain 342).